Consider the following 303-residue polypeptide: Digeranylgeranylglyceryl phosphate synthase (303 aa).

7 consecutive transmembrane segments (helical) span residues 23–43 (VLGVIAGAALLGEVNVAAAIA), 88–108 (LALALLALGPLLGLAVGPLTG), 130–150 (LPGNLAVSFSTASTLLYGSLA), 164–184 (TIPIILMVFLMTLAREVVKGV), 206–228 (FALRAALALACASLALAYLAAPL), 232–254 (GYAFLAFVTLGGLLSLASVAACL), and 272–292 (VAMFLGLIGILVDRLVQPVFY).

Belongs to the UbiA prenyltransferase family. DGGGP synthase subfamily. Requires Mg(2+) as cofactor.

The protein resides in the cell membrane. The enzyme catalyses sn-3-O-(geranylgeranyl)glycerol 1-phosphate + (2E,6E,10E)-geranylgeranyl diphosphate = 2,3-bis-O-(geranylgeranyl)-sn-glycerol 1-phosphate + diphosphate. Its pathway is membrane lipid metabolism; glycerophospholipid metabolism. Prenyltransferase that catalyzes the transfer of the geranylgeranyl moiety of geranylgeranyl diphosphate (GGPP) to the C2 hydroxyl of (S)-3-O-geranylgeranylglyceryl phosphate (GGGP). This reaction is the second ether-bond-formation step in the biosynthesis of archaeal membrane lipids. This Ignicoccus hospitalis (strain KIN4/I / DSM 18386 / JCM 14125) protein is Digeranylgeranylglyceryl phosphate synthase.